Reading from the N-terminus, the 668-residue chain is Biotin biosynthesis bifunctional protein BioWF (668 aa).

Arginine 293 contributes to the substrate binding site. 380–381 (GY) contacts pyridoxal 5'-phosphate. Residue histidine 405 coordinates substrate. Residues serine 451, 476–479 (DDAH), and 507–510 (TASK) contribute to the pyridoxal 5'-phosphate site. Lysine 510 is subject to N6-(pyridoxal phosphate)lysine.

This sequence in the N-terminal section; belongs to the BioW family. In the C-terminal section; belongs to the class-II pyridoxal-phosphate-dependent aminotransferase family. BioF subfamily. In terms of assembly, homodimer. It depends on Mg(2+) as a cofactor. The cofactor is pyridoxal 5'-phosphate.

It catalyses the reaction heptanedioate + ATP + CoA = 6-carboxyhexanoyl-CoA + AMP + diphosphate. It carries out the reaction 6-carboxyhexanoyl-[ACP] + L-alanine + H(+) = (8S)-8-amino-7-oxononanoate + holo-[ACP] + CO2. It functions in the pathway metabolic intermediate metabolism; pimeloyl-CoA biosynthesis; pimeloyl-CoA from pimelate: step 1/1. It participates in cofactor biosynthesis; biotin biosynthesis. Functionally, catalyzes both the decarboxylative condensation of pimeloyl-[acyl-carrier protein] and L-alanine to produce 8-amino-7-oxononanoate (AON), [acyl-carrier protein], and carbon dioxide, and the transformation of pimelate into pimeloyl-CoA with concomitant hydrolysis of ATP to AMP. In Cutibacterium acnes (strain SK137) (Propionibacterium acnes), this protein is Biotin biosynthesis bifunctional protein BioWF.